Reading from the N-terminus, the 469-residue chain is 3-isopropylmalate dehydratase large subunit (469 aa).

Positions 350, 410, and 413 each coordinate [4Fe-4S] cluster.

This sequence belongs to the aconitase/IPM isomerase family. LeuC type 1 subfamily. Heterodimer of LeuC and LeuD. The cofactor is [4Fe-4S] cluster.

It catalyses the reaction (2R,3S)-3-isopropylmalate = (2S)-2-isopropylmalate. It participates in amino-acid biosynthesis; L-leucine biosynthesis; L-leucine from 3-methyl-2-oxobutanoate: step 2/4. Its function is as follows. Catalyzes the isomerization between 2-isopropylmalate and 3-isopropylmalate, via the formation of 2-isopropylmaleate. The chain is 3-isopropylmalate dehydratase large subunit from Agrobacterium fabrum (strain C58 / ATCC 33970) (Agrobacterium tumefaciens (strain C58)).